The primary structure comprises 465 residues: Cerebellar degeneration-related protein 2-like (465 aa).

3 coiled-coil regions span residues 31–64, 91–142, and 188–266; these read AAEL…HEIE, ARDL…LEQL, and LEQE…YLLA. Residues 282–315 are disordered; that stretch reads APEADDPQPGSGDDSNAQDGVSSPAASPSHAVRK. Phosphoserine occurs at positions 308, 318, and 344. Positions 350-377 form a coiled coil; it reads MSILREVDEQYHALLEKYEELLSKCRQH. A disordered region spans residues 382 to 421; sequence RHAGVQTSRPISRDSSWRDLLGGEESPGEGKAGEKSLSQH. Position 407 is a phosphoserine (serine 407).

It belongs to the CDR2 family.

The chain is Cerebellar degeneration-related protein 2-like (Cdr2l) from Mus musculus (Mouse).